A 122-amino-acid polypeptide reads, in one-letter code: Basic phospholipase A2 PL-X (122 aa).

Intrachain disulfides connect cysteine 26–cysteine 115, cysteine 28–cysteine 44, cysteine 43–cysteine 95, cysteine 49–cysteine 122, cysteine 50–cysteine 88, cysteine 57–cysteine 81, and cysteine 75–cysteine 86. Ca(2+) contacts are provided by tyrosine 27, glycine 29, and glycine 31. Histidine 47 is a catalytic residue. Aspartate 48 is a Ca(2+) binding site. Aspartate 89 is an active-site residue.

This sequence belongs to the phospholipase A2 family. Group II subfamily. D49 sub-subfamily. It depends on Ca(2+) as a cofactor. In terms of tissue distribution, expressed by the venom gland.

The protein resides in the secreted. It carries out the reaction a 1,2-diacyl-sn-glycero-3-phosphocholine + H2O = a 1-acyl-sn-glycero-3-phosphocholine + a fatty acid + H(+). Functionally, PLA2 catalyzes the calcium-dependent hydrolysis of the 2-acyl groups in 3-sn-phosphoglycerides. This is Basic phospholipase A2 PL-X from Protobothrops flavoviridis (Habu).